A 393-amino-acid chain; its full sequence is NAD(P)H-quinone oxidoreductase subunit H, chloroplastic (393 aa).

The protein belongs to the complex I 49 kDa subunit family. As to quaternary structure, NDH is composed of at least 16 different subunits, 5 of which are encoded in the nucleus.

The protein resides in the plastid. It localises to the chloroplast thylakoid membrane. It carries out the reaction a plastoquinone + NADH + (n+1) H(+)(in) = a plastoquinol + NAD(+) + n H(+)(out). The catalysed reaction is a plastoquinone + NADPH + (n+1) H(+)(in) = a plastoquinol + NADP(+) + n H(+)(out). Functionally, NDH shuttles electrons from NAD(P)H:plastoquinone, via FMN and iron-sulfur (Fe-S) centers, to quinones in the photosynthetic chain and possibly in a chloroplast respiratory chain. The immediate electron acceptor for the enzyme in this species is believed to be plastoquinone. Couples the redox reaction to proton translocation, and thus conserves the redox energy in a proton gradient. The protein is NAD(P)H-quinone oxidoreductase subunit H, chloroplastic of Agrostis stolonifera (Creeping bentgrass).